Here is a 155-residue protein sequence, read N- to C-terminus: Transcription antitermination protein NusB (155 aa).

The protein belongs to the NusB family.

Involved in transcription antitermination. Required for transcription of ribosomal RNA (rRNA) genes. Binds specifically to the boxA antiterminator sequence of the ribosomal RNA (rrn) operons. In Azoarcus sp. (strain BH72), this protein is Transcription antitermination protein NusB.